The chain runs to 1165 residues: Transient receptor potential cation channel subfamily M member 5 (1165 aa).

At M1–A715 the chain is on the cytoplasmic side. Position 121 is a phosphoserine (S121). The Ca(2+) site is built by E212, C324, D333, D336, and E337. The chain crosses the membrane as a helical span at residues P716–L740. Topologically, residues D741 to S751 are extracellular. The chain crosses the membrane as a helical span at residues A752 to Q771. Residues E768 and Q771 each contribute to the Ca(2+) site. Topologically, residues S772 to N792 are cytoplasmic. Residues W793–R811 traverse the membrane as a helical segment. 2 residues coordinate Ca(2+): N794 and D797. Topologically, residues M812–E818 are extracellular. A helical membrane pass occupies residues A819 to I841. The Cytoplasmic segment spans residues H842–I850. The chain crosses the membrane as a helical span at residues I851–L880. Residues L881–D889 lie on the Extracellular side of the membrane. The segment at residues W890–I930 is an intramembrane region (pore-forming). A Selectivity filter motif is present at residues F904–Q906. Residues L931–A942 lie on the Extracellular side of the membrane. Residues N943–Q977 form a helical membrane-spanning segment. Residues E978–H1165 are Cytoplasmic-facing. E994 lines the Ca(2+) pocket. The tract at residues R1122–H1165 is disordered. Positions A1132–Q1141 are enriched in polar residues. The span at T1156 to H1165 shows a compositional bias: basic and acidic residues.

The protein belongs to the transient receptor (TC 1.A.4) family. LTrpC subfamily. TRPM5 sub-subfamily. In terms of assembly, homotetramer.

Its subcellular location is the cell membrane. The enzyme catalyses Na(+)(in) = Na(+)(out). It carries out the reaction K(+)(in) = K(+)(out). With respect to regulation, ca(2+)-activated cation channel. Displays voltage dependence modulation. Regulated by PI(4,5)P2 levels. PI(4,5)P 2 reverses the Ca(2+) -induced desensitization of channels. Is highly temperature-sensitive. Functionally, monovalent cation-selective ion channel activated by intracellular Ca(2+) in a voltage- and temperature-dependent manner. Mediates the transport of Na(+), K(+) and Cs(+) ions equally well. Activated directly by increase in intracellular Ca(2+), but is impermeable to it. The activation mechanism of TRPM5 involves a multistep process. TRPM5 activation involves ligand binding (i.e., tastant molecule, glucose stimulation) to Gq/G-protein coupled receptors (GPCR) and leads to the breakdown of phosphatidylinositol bisphosphate (PIP2) into diacylglycerol (DAG) and inositol trisphosphate (IP3), IP3 binds to its receptors in the endoplasmic reticulum and cause Ca(2+) release. Simultaneously with the intracellular Ca(2+) release, DAG activates the protein kinase C (PKC), which phosphorylates the TRPM5 channel. This phosphorylation combined with the bound Ca(2+), leads to a robust inward current allowing the entry of sodium ions (Na+) into the cell. This ion influx depolarizes the cell membrane, generating action potentials that propagate TRPM5 signals. The sequence is that of Transient receptor potential cation channel subfamily M member 5 from Danio rerio (Zebrafish).